The primary structure comprises 331 residues: Thiamine-monophosphate kinase (331 aa).

Asp43, Thr59, Thr60, and Asp61 together coordinate Mg(2+). His68 contacts substrate. Mg(2+) contacts are provided by Asp90, Asp138, and Asp231. 137–138 (GD) is an ATP binding site. An ATP-binding site is contributed by Ser233. Asp234 is a binding site for Mg(2+). Substrate contacts are provided by Glu284 and Trp328.

This sequence belongs to the thiamine-monophosphate kinase family.

It catalyses the reaction thiamine phosphate + ATP = thiamine diphosphate + ADP. The protein operates within cofactor biosynthesis; thiamine diphosphate biosynthesis; thiamine diphosphate from thiamine phosphate: step 1/1. Catalyzes the ATP-dependent phosphorylation of thiamine-monophosphate (TMP) to form thiamine-pyrophosphate (TPP), the active form of vitamin B1. This Corynebacterium glutamicum (strain ATCC 13032 / DSM 20300 / JCM 1318 / BCRC 11384 / CCUG 27702 / LMG 3730 / NBRC 12168 / NCIMB 10025 / NRRL B-2784 / 534) protein is Thiamine-monophosphate kinase.